The sequence spans 211 residues: Cytidylate kinase (211 aa).

Position 7-15 (7-15 (GPAASGKGT)) interacts with ATP.

The protein belongs to the cytidylate kinase family. Type 1 subfamily.

The protein resides in the cytoplasm. The catalysed reaction is CMP + ATP = CDP + ADP. It carries out the reaction dCMP + ATP = dCDP + ADP. This is Cytidylate kinase from Rhodopseudomonas palustris (strain BisA53).